Here is a 372-residue protein sequence, read N- to C-terminus: NAD(P)H-quinone oxidoreductase subunit 1 (372 aa).

8 helical membrane passes run 27–47, 97–117, 128–148, 166–186, 204–224, 266–286, 308–328, and 347–367; these read LLWI…GVLV, VLFT…WLIV, VGIG…GLLM, AAQS…IVMM, FLSW…ICAL, VLSA…PISI, SLGI…AILL, and FLLP…LAFP.

The protein belongs to the complex I subunit 1 family. As to quaternary structure, NDH-1 is composed of at least 11 different subunits.

The protein localises to the cellular thylakoid membrane. The catalysed reaction is a plastoquinone + NADH + (n+1) H(+)(in) = a plastoquinol + NAD(+) + n H(+)(out). It carries out the reaction a plastoquinone + NADPH + (n+1) H(+)(in) = a plastoquinol + NADP(+) + n H(+)(out). In terms of biological role, NDH-1 shuttles electrons from an unknown electron donor, via FMN and iron-sulfur (Fe-S) centers, to quinones in the respiratory and/or the photosynthetic chain. The immediate electron acceptor for the enzyme in this species is believed to be plastoquinone. Couples the redox reaction to proton translocation, and thus conserves the redox energy in a proton gradient. The protein is NAD(P)H-quinone oxidoreductase subunit 1 of Prochlorococcus marinus (strain NATL2A).